Consider the following 479-residue polypeptide: Poly(A) polymerase catalytic subunit (479 aa).

Catalysis depends on residues Asp202 and Asp204. 3 residues coordinate Ca(2+): Asp202, Asp204, and Asp253.

The protein belongs to the poxviridae poly(A) polymerase catalytic subunit family. In terms of assembly, heterodimer of a large (catalytic) subunit and a small (regulatory) subunit.

The catalysed reaction is RNA(n) + ATP = RNA(n)-3'-adenine ribonucleotide + diphosphate. In terms of biological role, polymerase that creates the 3'-poly(A) tail of mRNA's. In Homo sapiens (Human), this protein is Poly(A) polymerase catalytic subunit (OPG063).